We begin with the raw amino-acid sequence, 457 residues long: D-inositol 3-phosphate glycosyltransferase (457 aa).

Residue His34 coordinates 1D-myo-inositol 3-phosphate. Residues 40–41 and Gly48 contribute to the UDP-N-acetyl-alpha-D-glucosamine site; that span reads QP. 1D-myo-inositol 3-phosphate contacts are provided by residues 45 to 50, Lys103, Tyr136, Thr160, and Arg180; that span reads DAGGMN. UDP-N-acetyl-alpha-D-glucosamine is bound by residues Arg267, Lys272, and Val333. Mg(2+) is bound by residues Phe342, Arg343, and Ala345. Positions 355 and 363 each coordinate UDP-N-acetyl-alpha-D-glucosamine. A Mg(2+)-binding site is contributed by Thr369.

The protein belongs to the glycosyltransferase group 1 family. MshA subfamily. As to quaternary structure, homodimer.

The enzyme catalyses 1D-myo-inositol 3-phosphate + UDP-N-acetyl-alpha-D-glucosamine = 1D-myo-inositol 2-acetamido-2-deoxy-alpha-D-glucopyranoside 3-phosphate + UDP + H(+). Functionally, catalyzes the transfer of a N-acetyl-glucosamine moiety to 1D-myo-inositol 3-phosphate to produce 1D-myo-inositol 2-acetamido-2-deoxy-glucopyranoside 3-phosphate in the mycothiol biosynthesis pathway. The polypeptide is D-inositol 3-phosphate glycosyltransferase (Streptomyces coelicolor (strain ATCC BAA-471 / A3(2) / M145)).